We begin with the raw amino-acid sequence, 231 residues long: Flagellar L-ring protein (231 aa).

The signal sequence occupies residues 1–18 (MNRLMIVSLLGIATALGG). Cys19 is lipidated: N-palmitoyl cysteine. Cys19 is lipidated: S-diacylglycerol cysteine. Residues 118–141 (LSLSAEYGGSRDAKGDSQAGQSNS) form a disordered region.

It belongs to the FlgH family. As to quaternary structure, the basal body constitutes a major portion of the flagellar organelle and consists of four rings (L,P,S, and M) mounted on a central rod.

Its subcellular location is the cell outer membrane. The protein localises to the bacterial flagellum basal body. Assembles around the rod to form the L-ring and probably protects the motor/basal body from shearing forces during rotation. The protein is Flagellar L-ring protein of Pseudomonas aeruginosa (strain LESB58).